The following is a 150-amino-acid chain: Keratin-associated protein 15-1 (150 aa).

It belongs to the PMG family. In terms of assembly, interacts with hair keratins. Expressed at high levels in skin and at lower levels in the developing mammary gland.

Its function is as follows. In the hair cortex, hair keratin intermediate filaments are embedded in an interfilamentous matrix, consisting of hair keratin-associated proteins (KRTAP), which are essential for the formation of a rigid and resistant hair shaft through their extensive disulfide bond cross-linking with abundant cysteine residues of hair keratins. The matrix proteins include the high-sulfur and high-glycine-tyrosine keratins. The protein is Keratin-associated protein 15-1 of Mus musculus (Mouse).